The following is a 913-amino-acid chain: E3 ubiquitin-protein ligase ZNRF3 (913 aa).

The segment at 1–32 (MRPRSGGRPGAPGRRRRRLRRGPRGRRLPPPP) is disordered. The signal sequence occupies residues 1-52 (MRPRSGGRPGAPGRRRRRLRRGPRGRRLPPPPPLPLLLGLLLAAAGPGAARA). Residues 13–27 (GRRRRRLRRGPRGRR) are compositionally biased toward basic residues. Residues 53 to 216 (KETAFVEVVL…PRQPTEYFDM (164 aa)) lie on the Extracellular side of the membrane. The chain crosses the membrane as a helical span at residues 217–237 (GIFLAFFVVVSLVCLILLVKI). Residues 238–913 (KLKQRRSQNS…GSGPGIGTGA (676 aa)) are Cytoplasmic-facing. An RING-type; atypical zinc finger spans residues 290–331 (CAICLEKYIDGEELRVIPCTHRFHRKCVDPWLLQHHTCPHCR). Disordered stretches follow at residues 601 to 669 (AVHL…GLEV) and 855 to 913 (REEE…GTGA). Composition is skewed to polar residues over residues 634 to 664 (SGDQ…STSE) and 881 to 890 (ASLSSAPQDT). The span at 903-913 (PGSGPGIGTGA) shows a compositional bias: gly residues.

Belongs to the ZNRF3 family. In terms of assembly, interacts with LRP6, FZD4, FZD5, FZD6 and FZD8. Interacts with RSPO1; interaction promotes indirect interaction with LGR4 and membrane clearance of ZNRF3. Interacts with LMBR1L.

The protein resides in the cell membrane. The catalysed reaction is S-ubiquitinyl-[E2 ubiquitin-conjugating enzyme]-L-cysteine + [acceptor protein]-L-lysine = [E2 ubiquitin-conjugating enzyme]-L-cysteine + N(6)-ubiquitinyl-[acceptor protein]-L-lysine.. It functions in the pathway protein modification; protein ubiquitination. With respect to regulation, negatively regulated by R-spondin proteins such as RSPO1: interaction with RSPO1 induces the indirect association between ZNRF3 and LGR4, promoting membrane clearance of ZNRF3. Its function is as follows. E3 ubiquitin-protein ligase that acts as a negative regulator of the Wnt signaling pathway by mediating the ubiquitination and subsequent degradation of Wnt receptor complex components Frizzled and LRP6. Acts on both canonical and non-canonical Wnt signaling pathway. Acts as a tumor suppressor in the intestinal stem cell zone by inhibiting the Wnt signaling pathway, thereby restricting the size of the intestinal stem cell zone. Along with RSPO2 and RNF43, constitutes a master switch that governs limb specification. The polypeptide is E3 ubiquitin-protein ligase ZNRF3 (Znrf3) (Mus musculus (Mouse)).